The primary structure comprises 255 residues: Urease accessory protein UreD 1 (255 aa).

This sequence belongs to the UreD family. In terms of assembly, ureD, UreF and UreG form a complex that acts as a GTP-hydrolysis-dependent molecular chaperone, activating the urease apoprotein by helping to assemble the nickel containing metallocenter of UreC. The UreE protein probably delivers the nickel.

The protein localises to the cytoplasm. Functionally, required for maturation of urease via the functional incorporation of the urease nickel metallocenter. This is Urease accessory protein UreD 1 from Streptomyces griseus subsp. griseus (strain JCM 4626 / CBS 651.72 / NBRC 13350 / KCC S-0626 / ISP 5235).